Consider the following 595-residue polypeptide: Probable hydrolase M10 (595 aa).

The first 23 residues, Met-1–Thr-23, serve as a signal peptide directing secretion. Residues Asn-59, Asn-87, Asn-266, Asn-436, Asn-457, and Asn-561 are each glycosylated (N-linked (GlcNAc...) asparagine).

This sequence belongs to the beta-lactamase family.

The protein operates within secondary metabolite biosynthesis. Functionally, probable hydrolase; part of the gene cluster that mediates the biosynthesis of squalestatin S1 (SQS1, also known as zaragozic acid A), a heavily oxidized fungal polyketide that offers potent cholesterol lowering activity by targeting squalene synthase (SS). SQS1 is composed of a 2,8-dioxobicyclic[3.2.1]octane-3,4,5-tricarboxyclic acid core that is connected to two lipophilic polyketide arms. These initial steps feature the priming of an unusual benzoic acid starter unit onto the highly reducing polyketide synthase pks2, followed by oxaloacetate extension and product release to generate a tricarboxylic acid containing product. The phenylalanine ammonia lyase (PAL) M7 and the acyl-CoA ligase M9 are involved in transforming phenylalanine into benzoyl-CoA. The citrate synthase-like protein R3 is involved in connecting the C-alpha-carbons of the hexaketide chain and oxaloacetate to afford the tricarboxylic acid unit. The potential hydrolytic enzymes, M8 and M10, are in close proximity to pks2 and may participate in product release. On the other side, the tetraketide arm is synthesized by a the squalestatin tetraketide synthase pks1 and enzymatically esterified to the core in the last biosynthetic step, by the acetyltransferase M4. The biosynthesis of the tetraketide must involve 3 rounds of chain extension. After the first and second rounds methyl-transfer occurs, and in all rounds of extension the ketoreductase and dehydratase are active. The enoyl reductase and C-MeT of pks1 are not active in the final round of extension. The acetyltransferase M4 appears to have a broad substrate selectivity for its acyl CoA substrate, allowing the in vitro synthesis of novel squalestatins. The biosynthesis of SQS1 requires several oxidative steps likely performed by oxidoreductases M1, R1 and R2. Finally, in support of the identification of the cluster as being responsible for SQS1 production, the cluster contains a gene encoding a putative squalene synthase (SS) R6, suggesting a likely mechanism for self-resistance. This is Probable hydrolase M10 from Phoma sp. (strain ATCC 20986 / MF5453).